A 186-amino-acid polypeptide reads, in one-letter code: Homeobox expressed in ES cells 1 (186 aa).

The segment at residues 109–168 is a DNA-binding region (homeobox); sequence GRRPRTAFTRSQIEILENVFRVNSYPGIDIREELAGKLALDEDRIQIWFQNRRAKLKRSH.

The protein belongs to the ANF homeobox family. As to quaternary structure, interacts (via N-terminus) with zyx.

It is found in the nucleus. In terms of biological role, regulates the earliest stages of development of the anterior neural plate. Plays a role in forebrain development by inhibiting the expression of otx2 and pax6 in the rostral region of the anterior neural plate. Necessary for both neural differentiation and neural patterning. Controls Spemann organizer development. May act as a transcriptional repressor. This chain is Homeobox expressed in ES cells 1, found in Xenopus tropicalis (Western clawed frog).